A 153-amino-acid polypeptide reads, in one-letter code: SsrA-binding protein (153 aa).

The protein belongs to the SmpB family.

The protein localises to the cytoplasm. Required for rescue of stalled ribosomes mediated by trans-translation. Binds to transfer-messenger RNA (tmRNA), required for stable association of tmRNA with ribosomes. tmRNA and SmpB together mimic tRNA shape, replacing the anticodon stem-loop with SmpB. tmRNA is encoded by the ssrA gene; the 2 termini fold to resemble tRNA(Ala) and it encodes a 'tag peptide', a short internal open reading frame. During trans-translation Ala-aminoacylated tmRNA acts like a tRNA, entering the A-site of stalled ribosomes, displacing the stalled mRNA. The ribosome then switches to translate the ORF on the tmRNA; the nascent peptide is terminated with the 'tag peptide' encoded by the tmRNA and targeted for degradation. The ribosome is freed to recommence translation, which seems to be the essential function of trans-translation. The polypeptide is SsrA-binding protein (Sulfurovum sp. (strain NBC37-1)).